We begin with the raw amino-acid sequence, 235 residues long: Large ribosomal subunit protein uL1 (235 aa).

A disordered region spans residues 1 to 22 (MSKNSKAYRAAAEKVDRSNPYT).

The protein belongs to the universal ribosomal protein uL1 family. In terms of assembly, part of the 50S ribosomal subunit.

In terms of biological role, binds directly to 23S rRNA. The L1 stalk is quite mobile in the ribosome, and is involved in E site tRNA release. Functionally, protein L1 is also a translational repressor protein, it controls the translation of the L11 operon by binding to its mRNA. The polypeptide is Large ribosomal subunit protein uL1 (Mycobacterium ulcerans (strain Agy99)).